The chain runs to 115 residues: Phosphoribosyl-AMP cyclohydrolase (115 aa).

Asp80 contacts Mg(2+). Residue Cys81 coordinates Zn(2+). Positions 82 and 84 each coordinate Mg(2+). Residues Cys97 and Cys104 each coordinate Zn(2+).

It belongs to the PRA-CH family. In terms of assembly, homodimer. Requires Mg(2+) as cofactor. Zn(2+) serves as cofactor.

It is found in the cytoplasm. It catalyses the reaction 1-(5-phospho-beta-D-ribosyl)-5'-AMP + H2O = 1-(5-phospho-beta-D-ribosyl)-5-[(5-phospho-beta-D-ribosylamino)methylideneamino]imidazole-4-carboxamide. It participates in amino-acid biosynthesis; L-histidine biosynthesis; L-histidine from 5-phospho-alpha-D-ribose 1-diphosphate: step 3/9. Catalyzes the hydrolysis of the adenine ring of phosphoribosyl-AMP. This is Phosphoribosyl-AMP cyclohydrolase from Mycobacterium bovis (strain ATCC BAA-935 / AF2122/97).